The chain runs to 1172 residues: DNA-directed RNA polymerase subunit beta (1172 aa).

The protein belongs to the RNA polymerase beta chain family. The RNAP catalytic core consists of 2 alpha, 1 beta, 1 beta' and 1 omega subunit. When a sigma factor is associated with the core the holoenzyme is formed, which can initiate transcription.

It catalyses the reaction RNA(n) + a ribonucleoside 5'-triphosphate = RNA(n+1) + diphosphate. Its function is as follows. DNA-dependent RNA polymerase catalyzes the transcription of DNA into RNA using the four ribonucleoside triphosphates as substrates. The polypeptide is DNA-directed RNA polymerase subunit beta (Mycobacterium sp. (strain JLS)).